A 454-amino-acid chain; its full sequence is tRNA modification GTPase MnmE (454 aa).

Positions 23, 80, and 120 each coordinate (6S)-5-formyl-5,6,7,8-tetrahydrofolate. The 162-residue stretch at 216–377 (GMRVVIAGRP…VREHLKACIG (162 aa)) folds into the TrmE-type G domain. N226 lines the K(+) pocket. Residues 226-231 (NAGKSS), 245-251 (TEIAGTT), 270-273 (DTAG), and 335-338 (NKAD) each bind GTP. S230 contacts Mg(2+). Positions 245, 247, and 250 each coordinate K(+). Residue T251 participates in Mg(2+) binding. K454 contacts (6S)-5-formyl-5,6,7,8-tetrahydrofolate.

Belongs to the TRAFAC class TrmE-Era-EngA-EngB-Septin-like GTPase superfamily. TrmE GTPase family. In terms of assembly, homodimer. Heterotetramer of two MnmE and two MnmG subunits. K(+) is required as a cofactor.

The protein resides in the cytoplasm. In terms of biological role, exhibits a very high intrinsic GTPase hydrolysis rate. Involved in the addition of a carboxymethylaminomethyl (cmnm) group at the wobble position (U34) of certain tRNAs, forming tRNA-cmnm(5)s(2)U34. The protein is tRNA modification GTPase MnmE of Pseudoalteromonas translucida (strain TAC 125).